The following is a 228-amino-acid chain: PKHD-type hydroxylase Rmet_3078 (228 aa).

The 101-residue stretch at 80-180 folds into the Fe2OG dioxygenase domain; sequence IVYPPMFNRY…RVGCFFWIQS (101 aa). 3 residues coordinate Fe cation: His98, Asp100, and His161. A 2-oxoglutarate-binding site is contributed by Arg171.

Fe(2+) serves as cofactor. It depends on L-ascorbate as a cofactor.

The polypeptide is PKHD-type hydroxylase Rmet_3078 (Cupriavidus metallidurans (strain ATCC 43123 / DSM 2839 / NBRC 102507 / CH34) (Ralstonia metallidurans)).